The primary structure comprises 397 residues: Elongation factor Tu (397 aa).

One can recognise a tr-type G domain in the interval 10–206; sequence KPHVNIGTIG…AIDSYIPTPE (197 aa). A G1 region spans residues 19 to 26; the sequence is GHVDHGKT. Residue 19–26 coordinates GTP; it reads GHVDHGKT. T26 lines the Mg(2+) pocket. The segment at 60 to 64 is G2; it reads GITIN. Residues 81–84 are G3; the sequence is DCPG. Residues 81–85 and 136–139 contribute to the GTP site; these read DCPGH and NKAD. The G4 stretch occupies residues 136–139; it reads NKAD. The segment at 174-176 is G5; that stretch reads SAL.

The protein belongs to the TRAFAC class translation factor GTPase superfamily. Classic translation factor GTPase family. EF-Tu/EF-1A subfamily. Monomer.

The protein localises to the cytoplasm. The enzyme catalyses GTP + H2O = GDP + phosphate + H(+). Its function is as follows. GTP hydrolase that promotes the GTP-dependent binding of aminoacyl-tRNA to the A-site of ribosomes during protein biosynthesis. This is Elongation factor Tu from Clostridium botulinum (strain ATCC 19397 / Type A).